The following is a 99-amino-acid chain: uncharacterized protein (99 aa).

This is an uncharacterized protein from Saccharolobus islandicus (Sulfolobus islandicus).